We begin with the raw amino-acid sequence, 220 residues long: ATP-dependent dethiobiotin synthetase BioD (220 aa).

Residue 12–17 (DVGKTI) participates in ATP binding. T16 lines the Mg(2+) pocket. K37 is an active-site residue. T41 contributes to the substrate binding site. ATP-binding positions include D49, 107–110 (EGAG), 167–168 (GS), and 197–199 (PAG). D49 and E107 together coordinate Mg(2+).

It belongs to the dethiobiotin synthetase family. In terms of assembly, homodimer. The cofactor is Mg(2+).

Its subcellular location is the cytoplasm. The catalysed reaction is (7R,8S)-7,8-diammoniononanoate + CO2 + ATP = (4R,5S)-dethiobiotin + ADP + phosphate + 3 H(+). It participates in cofactor biosynthesis; biotin biosynthesis; biotin from 7,8-diaminononanoate: step 1/2. Catalyzes a mechanistically unusual reaction, the ATP-dependent insertion of CO2 between the N7 and N8 nitrogen atoms of 7,8-diaminopelargonic acid (DAPA, also called 7,8-diammoniononanoate) to form a ureido ring. The protein is ATP-dependent dethiobiotin synthetase BioD of Corynebacterium efficiens (strain DSM 44549 / YS-314 / AJ 12310 / JCM 11189 / NBRC 100395).